We begin with the raw amino-acid sequence, 301 residues long: N-acetylmuramic acid 6-phosphate etherase (301 aa).

Positions 57–220 (TYEKMLFGGR…STSLMIKKGK (164 aa)) constitute an SIS domain. Glu-85 functions as the Proton donor in the catalytic mechanism. The active site involves Glu-116.

Belongs to the GCKR-like family. MurNAc-6-P etherase subfamily. Homodimer.

The enzyme catalyses N-acetyl-D-muramate 6-phosphate + H2O = N-acetyl-D-glucosamine 6-phosphate + (R)-lactate. It functions in the pathway amino-sugar metabolism; N-acetylmuramate degradation. In terms of biological role, specifically catalyzes the cleavage of the D-lactyl ether substituent of MurNAc 6-phosphate, producing GlcNAc 6-phosphate and D-lactate. The polypeptide is N-acetylmuramic acid 6-phosphate etherase (Clostridium botulinum (strain Eklund 17B / Type B)).